Reading from the N-terminus, the 164-residue chain is Translation initiation factor IF-3 (164 aa).

Belongs to the IF-3 family. Monomer.

It is found in the cytoplasm. In terms of biological role, IF-3 binds to the 30S ribosomal subunit and shifts the equilibrium between 70S ribosomes and their 50S and 30S subunits in favor of the free subunits, thus enhancing the availability of 30S subunits on which protein synthesis initiation begins. The polypeptide is Translation initiation factor IF-3 (Bordetella bronchiseptica (strain ATCC BAA-588 / NCTC 13252 / RB50) (Alcaligenes bronchisepticus)).